Consider the following 615-residue polypeptide: 1-deoxy-D-xylulose-5-phosphate synthase (615 aa).

Residues His72 and 111-113 (GHS) each bind thiamine diphosphate. Asp142 lines the Mg(2+) pocket. Thiamine diphosphate-binding positions include 143–144 (GA), Asn171, Tyr278, and Glu360. Residue Asn171 participates in Mg(2+) binding.

This sequence belongs to the transketolase family. DXPS subfamily. In terms of assembly, homodimer. It depends on Mg(2+) as a cofactor. The cofactor is thiamine diphosphate.

It carries out the reaction D-glyceraldehyde 3-phosphate + pyruvate + H(+) = 1-deoxy-D-xylulose 5-phosphate + CO2. The protein operates within metabolic intermediate biosynthesis; 1-deoxy-D-xylulose 5-phosphate biosynthesis; 1-deoxy-D-xylulose 5-phosphate from D-glyceraldehyde 3-phosphate and pyruvate: step 1/1. Catalyzes the acyloin condensation reaction between C atoms 2 and 3 of pyruvate and glyceraldehyde 3-phosphate to yield 1-deoxy-D-xylulose-5-phosphate (DXP). This is 1-deoxy-D-xylulose-5-phosphate synthase from Campylobacter jejuni subsp. jejuni serotype O:23/36 (strain 81-176).